A 361-amino-acid chain; its full sequence is Probable dual-specificity RNA methyltransferase RlmN (361 aa).

The active-site Proton acceptor is the E91. The Radical SAM core domain occupies 97–329; sequence QHYGLSVCVT…KKKGVNCVVR (233 aa). C104 and C340 are disulfide-bonded. C111, C115, and C118 together coordinate [4Fe-4S] cluster. S-adenosyl-L-methionine-binding positions include 163-164, S195, 218-220, and N296; these read GE and SLH. The S-methylcysteine intermediate role is filled by C340.

Belongs to the radical SAM superfamily. RlmN family. Requires [4Fe-4S] cluster as cofactor.

Its subcellular location is the cytoplasm. The enzyme catalyses adenosine(2503) in 23S rRNA + 2 reduced [2Fe-2S]-[ferredoxin] + 2 S-adenosyl-L-methionine = 2-methyladenosine(2503) in 23S rRNA + 5'-deoxyadenosine + L-methionine + 2 oxidized [2Fe-2S]-[ferredoxin] + S-adenosyl-L-homocysteine. It catalyses the reaction adenosine(37) in tRNA + 2 reduced [2Fe-2S]-[ferredoxin] + 2 S-adenosyl-L-methionine = 2-methyladenosine(37) in tRNA + 5'-deoxyadenosine + L-methionine + 2 oxidized [2Fe-2S]-[ferredoxin] + S-adenosyl-L-homocysteine. Its function is as follows. Specifically methylates position 2 of adenine 2503 in 23S rRNA and position 2 of adenine 37 in tRNAs. The protein is Probable dual-specificity RNA methyltransferase RlmN of Streptococcus pneumoniae serotype 19F (strain G54).